The primary structure comprises 364 residues: Photoreceptor outer segment membrane glycoprotein 2 (364 aa).

The Cytoplasmic portion of the chain corresponds to 1 to 24; it reads MTVLKVKFTKTKRDKLAQILWILN. The helical transmembrane segment at 25-43 threads the bilayer; it reads WVSVVSGIILFSLGLFLKI. Residues 44–61 lie on the Lumenal side of the membrane; the sequence is EIKKRNEVMAKGDINSVP. A helical transmembrane segment spans residues 62-80; the sequence is NMLISVGVIACVVNFLGGK. The Cytoplasmic segment spans residues 81 to 99; it reads ICYDCSDANKFSRWKLIML. The chain crosses the membrane as a helical span at residues 100–123; it reads PYIICTFCFTFCILLGALMCYTMR. Over 124-264 the chain is Lumenal; the sequence is NELEESLYLG…LEYYTAIMRS (141 aa). The N-linked (GlcNAc...) asparagine glycan is linked to Asn229. Residues 265–290 traverse the membrane as a helical segment; the sequence is IGIAALLIWLFELSVLIGVRYLQTAM. Residues 291–364 are Cytoplasmic-facing; the sequence is KNVLLQGDLQ…VTAKSIPAAS (74 aa).

The protein belongs to the PRPH2/ROM1 family.

It localises to the membrane. This chain is Photoreceptor outer segment membrane glycoprotein 2, found in Gallus gallus (Chicken).